A 494-amino-acid chain; its full sequence is ATP synthase subunit beta (494 aa).

177-184 (GGAGVGKT) is an ATP binding site.

This sequence belongs to the ATPase alpha/beta chains family. As to quaternary structure, F-type ATPases have 2 components, CF(1) - the catalytic core - and CF(0) - the membrane proton channel. CF(1) has five subunits: alpha(3), beta(3), gamma(1), delta(1), epsilon(1). CF(0) has three main subunits: a(1), b(2) and c(9-12). The alpha and beta chains form an alternating ring which encloses part of the gamma chain. CF(1) is attached to CF(0) by a central stalk formed by the gamma and epsilon chains, while a peripheral stalk is formed by the delta and b chains.

The protein localises to the cell membrane. It carries out the reaction ATP + H2O + 4 H(+)(in) = ADP + phosphate + 5 H(+)(out). Functionally, produces ATP from ADP in the presence of a proton gradient across the membrane. The catalytic sites are hosted primarily by the beta subunits. The sequence is that of ATP synthase subunit beta from Bifidobacterium adolescentis (strain ATCC 15703 / DSM 20083 / NCTC 11814 / E194a).